Reading from the N-terminus, the 122-residue chain is Large ribosomal subunit protein uL14 (122 aa).

The protein belongs to the universal ribosomal protein uL14 family. In terms of assembly, part of the 50S ribosomal subunit. Forms a cluster with proteins L3 and L19. In the 70S ribosome, L14 and L19 interact and together make contacts with the 16S rRNA in bridges B5 and B8.

Its function is as follows. Binds to 23S rRNA. Forms part of two intersubunit bridges in the 70S ribosome. This is Large ribosomal subunit protein uL14 from Shewanella frigidimarina (strain NCIMB 400).